A 334-amino-acid polypeptide reads, in one-letter code: Protein translocase subunit SecF (334 aa).

Transmembrane regions (helical) follow at residues 18–38 (VAAG…AVTG), 144–164 (GAAM…AIRF), 168–190 (FGLA…IKIF), 195–217 (SLTV…IIIF), 258–278 (ATLA…WVMA), and 279–299 (FGVV…LLWI).

The protein belongs to the SecD/SecF family. SecF subfamily. In terms of assembly, forms a complex with SecD. Part of the essential Sec protein translocation apparatus which comprises SecA, SecYEG and auxiliary proteins SecDF. Other proteins may also be involved.

The protein localises to the cell inner membrane. Its function is as follows. Part of the Sec protein translocase complex. Interacts with the SecYEG preprotein conducting channel. SecDF uses the proton motive force (PMF) to complete protein translocation after the ATP-dependent function of SecA. The sequence is that of Protein translocase subunit SecF from Gemmatimonas aurantiaca (strain DSM 14586 / JCM 11422 / NBRC 100505 / T-27).